Reading from the N-terminus, the 20-residue chain is Agglutinin beta-2 chain isoform 1 (20 aa).

Positions 1–10 are enriched in polar residues; the sequence is TQSTGTSQTI. Residues 1 to 20 are disordered; it reads TQSTGTSQTIAVGLWGGPDN.

This sequence belongs to the jacalin lectin family. As to quaternary structure, tetramer of four alpha chains associated with two or four beta chains.

In terms of biological role, alpha-methyl-D-mannoside and D-mannose specific lectin. Binds IgA. The polypeptide is Agglutinin beta-2 chain isoform 1 (Morus nigra (Black mulberry)).